Reading from the N-terminus, the 811-residue chain is Zinc finger CCCH domain-containing protein 11A (811 aa).

C3H1-type zinc fingers lie at residues 2–30 (PNQG…HCEA), 32–58 (LGNE…HMEI), and 61–87 (KRSE…HHNR). Serine 109 is modified (phosphoserine). Residues lysine 115 and lysine 125 each participate in a glycyl lysine isopeptide (Lys-Gly) (interchain with G-Cter in SUMO2) cross-link. The residue at position 133 (serine 133) is a Phosphoserine. Disordered regions lie at residues 140-195 (MKVE…GLRV), 224-258 (KKMK…KENV), 286-352 (GKRK…EKVN), and 368-434 (ERAS…TCIK). Lysine 141 participates in a covalent cross-link: Glycyl lysine isopeptide (Lys-Gly) (interchain with G-Cter in SUMO2). 2 positions are modified to phosphoserine: serine 150 and serine 172. Residues 161–176 (ADDDEDDDDQFSEEGD) show a composition bias toward acidic residues. Position 291 is a phosphoserine (serine 291). Basic and acidic residues-rich tracts occupy residues 310–323 (KKVE…DKTP) and 368–391 (ERAS…KTDD). The residue at position 322 (threonine 322) is a Phosphothreonine. A coiled-coil region spans residues 363–424 (EEILLERASQ…KHRQQEAERQ (62 aa)). Phosphoserine is present on serine 371. Residues 392-403 (STSGARSSSTIR) are compositionally biased toward polar residues. Residues 418 to 434 (QQEAERQKSKKDTTCIK) are compositionally biased toward basic and acidic residues. A Glycyl lysine isopeptide (Lys-Gly) (interchain with G-Cter in SUMO2) cross-link involves residue lysine 479. Residues 483–550 (ALRVQQSSES…KEASGETTGV (68 aa)) form a disordered region. The span at 487–499 (QQSSESSTSSPSQ) shows a compositional bias: low complexity. Residue lysine 620 forms a Glycyl lysine isopeptide (Lys-Gly) (interchain with G-Cter in SUMO2) linkage. Residues 716–769 (TVPEAENPRDSLVLPPTQSSSDSSPPEVSGPSSSQMSMKTRRLSSASTGKPQLS) are disordered. The segment covering 730–749 (PPTQSSSDSSPPEVSGPSSS) has biased composition (low complexity). The segment covering 750–766 (QMSMKTRRLSSASTGKP) has biased composition (polar residues).

Interacts with TREX complex components THOC2, DDX39 and POLDIP3; the interactions are ATP-dependent. Interacts with PABPN1; this interaction retains ZC3H11A in nuclear speckles. Interacts with KPNA3.

It localises to the nucleus speckle. In terms of biological role, through its association with TREX complex components, may participate in the export and post-transcriptional coordination of selected mRNA transcripts, including those required to maintain the metabolic processes in embryonic cells. Binds RNA. The chain is Zinc finger CCCH domain-containing protein 11A (ZC3H11A) from Pongo abelii (Sumatran orangutan).